We begin with the raw amino-acid sequence, 227 residues long: Cytidylate kinase (227 aa).

Residue 12–20 (GPSGAGKGT) participates in ATP binding.

This sequence belongs to the cytidylate kinase family. Type 1 subfamily.

It is found in the cytoplasm. The enzyme catalyses CMP + ATP = CDP + ADP. The catalysed reaction is dCMP + ATP = dCDP + ADP. The protein is Cytidylate kinase of Erwinia tasmaniensis (strain DSM 17950 / CFBP 7177 / CIP 109463 / NCPPB 4357 / Et1/99).